The sequence spans 205 residues: MKNRFYYNLIIKRLYTRSGGLRKPQKVTNDPESINRKVYWCFEHKPVKRTIINLIYSHNELKIFSNLLNHPTVGSSLIHELSLDGPYTAFFPSNEAMQLINIESFNKLYNDENKLSEFVLNHVTKEYWLYRDLYGSSYQPWLMYNEKREAPEKLRNLLNNDLIVKIEGEFKHCNHSIYLNGSKIIRPNMKCHNGVVHIVDKPIIF.

One can recognise an FAS1 domain in the interval 48–203 (KRTIINLIYS…GVVHIVDKPI (156 aa)). Positions 154–172 (LRNLLNNDLIVKIEGEFKH) are required for binding to host hemoglobin. Heme binding domain stretches follow at residues 171–181 (KHCNHSIYLNG) and 191–200 (CHNGVVHIVD).

Component of the hemozoin formation complex (HFC) composed of falcipains FP2A and/or FP2B, plasmepsins PMII, PMIII/HAP and PMIV, heme detoxifying protein HDP and falcilysin FLN. The HFC complex is involved in hemoglobin degradation and detoxification of heme in the food vacuole during the asexual blood stage. Interacts with falcipain 2; the interaction is direct and enhances HDP catalytic activity. Interacts with host hemoglobin.

The protein resides in the vacuole. Its subcellular location is the host cytoplasm. It is found in the host cytosol. The catalysed reaction is 2 Fe(III)-heme b = beta-hematin. Functionally, heme detoxifying enzyme that converts heme to crystalline hemozoin (beta-hematin) to protect the organism from the toxic effects of heme. During its development, P.falciparum proteolyzes vast amounts of host hemoglobin, leading to heme release. In Plasmodium falciparum (isolate 3D7), this protein is Heme ligase.